The chain runs to 171 residues: Endoribonuclease YbeY (171 aa).

H115, H119, and H125 together coordinate Zn(2+).

Belongs to the endoribonuclease YbeY family. Requires Zn(2+) as cofactor.

It localises to the cytoplasm. Its function is as follows. Single strand-specific metallo-endoribonuclease involved in late-stage 70S ribosome quality control and in maturation of the 3' terminus of the 16S rRNA. This chain is Endoribonuclease YbeY, found in Tropheryma whipplei (strain TW08/27) (Whipple's bacillus).